The following is a 699-amino-acid chain: Elongation factor G (699 aa).

Residues 8–283 form the tr-type G domain; the sequence is EHIRNIGICA…AVVDFLPSPI (276 aa). Residues 17 to 24, 81 to 85, and 135 to 138 contribute to the GTP site; these read AHIDAGKT, DTPGH, and NKMD.

It belongs to the TRAFAC class translation factor GTPase superfamily. Classic translation factor GTPase family. EF-G/EF-2 subfamily.

The protein localises to the cytoplasm. In terms of biological role, catalyzes the GTP-dependent ribosomal translocation step during translation elongation. During this step, the ribosome changes from the pre-translocational (PRE) to the post-translocational (POST) state as the newly formed A-site-bound peptidyl-tRNA and P-site-bound deacylated tRNA move to the P and E sites, respectively. Catalyzes the coordinated movement of the two tRNA molecules, the mRNA and conformational changes in the ribosome. The chain is Elongation factor G from Rickettsia conorii (strain ATCC VR-613 / Malish 7).